The sequence spans 102 residues: Small ribosomal subunit protein uS10 (102 aa).

This sequence belongs to the universal ribosomal protein uS10 family. In terms of assembly, part of the 30S ribosomal subunit.

Functionally, involved in the binding of tRNA to the ribosomes. The polypeptide is Small ribosomal subunit protein uS10 (Syntrophotalea carbinolica (strain DSM 2380 / NBRC 103641 / GraBd1) (Pelobacter carbinolicus)).